Here is a 205-residue protein sequence, read N- to C-terminus: Probable GTP-binding protein EngB (205 aa).

Residues 25-199 (NGIEIAFIGY…KLSLNSSYKK (175 aa)) form the EngB-type G domain. Residues 33 to 40 (GYSNTGKS), 60 to 64 (GRTQL), 78 to 81 (DLPG), 145 to 148 (TKCD), and 178 to 180 (FSS) contribute to the GTP site. Mg(2+) contacts are provided by Ser-40 and Thr-62.

It belongs to the TRAFAC class TrmE-Era-EngA-EngB-Septin-like GTPase superfamily. EngB GTPase family. It depends on Mg(2+) as a cofactor.

Its function is as follows. Necessary for normal cell division and for the maintenance of normal septation. The protein is Probable GTP-binding protein EngB of Buchnera aphidicola subsp. Acyrthosiphon pisum (strain 5A).